The chain runs to 188 residues: ATP synthase subunit b (188 aa).

Residues 19–39 (VYVLGATIVSFLILFLFITYF) traverse the membrane as a helical segment.

This sequence belongs to the ATPase B chain family. F-type ATPases have 2 components, F(1) - the catalytic core - and F(0) - the membrane proton channel. F(1) has five subunits: alpha(3), beta(3), gamma(1), delta(1), epsilon(1). F(0) has three main subunits: a(1), b(2) and c(10-14). The alpha and beta chains form an alternating ring which encloses part of the gamma chain. F(1) is attached to F(0) by a central stalk formed by the gamma and epsilon chains, while a peripheral stalk is formed by the delta and b chains.

It is found in the cell membrane. Its function is as follows. F(1)F(0) ATP synthase produces ATP from ADP in the presence of a proton or sodium gradient. F-type ATPases consist of two structural domains, F(1) containing the extramembraneous catalytic core and F(0) containing the membrane proton channel, linked together by a central stalk and a peripheral stalk. During catalysis, ATP synthesis in the catalytic domain of F(1) is coupled via a rotary mechanism of the central stalk subunits to proton translocation. In terms of biological role, component of the F(0) channel, it forms part of the peripheral stalk, linking F(1) to F(0). The protein is ATP synthase subunit b of Mesomycoplasma hyopneumoniae (strain J / ATCC 25934 / NCTC 10110) (Mycoplasma hyopneumoniae).